The following is a 272-amino-acid chain: ATP synthase subunit a (272 aa).

5 helical membrane-spanning segments follow: residues 41–61, 101–121, 143–165, 221–241, and 243–263; these read VLNI…LLIF, LIAP…LMDL, VPSA…ILYY, LIFI…LNVP, and AIFH…LTIV.

This sequence belongs to the ATPase A chain family. As to quaternary structure, F-type ATPases have 2 components, CF(1) - the catalytic core - and CF(0) - the membrane proton channel. CF(1) has five subunits: alpha(3), beta(3), gamma(1), delta(1), epsilon(1). CF(0) has three main subunits: a(1), b(2) and c(9-12). The alpha and beta chains form an alternating ring which encloses part of the gamma chain. CF(1) is attached to CF(0) by a central stalk formed by the gamma and epsilon chains, while a peripheral stalk is formed by the delta and b chains.

It localises to the cell inner membrane. In terms of biological role, key component of the proton channel; it plays a direct role in the translocation of protons across the membrane. The sequence is that of ATP synthase subunit a from Sodalis glossinidius (strain morsitans).